The sequence spans 98 residues: Large ribosomal subunit protein uL23 (98 aa).

This sequence belongs to the universal ribosomal protein uL23 family. Part of the 50S ribosomal subunit. Contacts protein L29, and trigger factor when it is bound to the ribosome.

In terms of biological role, one of the early assembly proteins it binds 23S rRNA. One of the proteins that surrounds the polypeptide exit tunnel on the outside of the ribosome. Forms the main docking site for trigger factor binding to the ribosome. This Rickettsia prowazekii (strain Madrid E) protein is Large ribosomal subunit protein uL23.